The chain runs to 504 residues: Cobyric acid synthase (504 aa).

In terms of domain architecture, GATase cobBQ-type spans 251 to 448; sequence DITIAIVQLP…LHGLFDSDAF (198 aa). The Nucleophile role is filled by Cys332. The active site involves His440.

Belongs to the CobB/CobQ family. CobQ subfamily.

It functions in the pathway cofactor biosynthesis; adenosylcobalamin biosynthesis. Catalyzes amidations at positions B, D, E, and G on adenosylcobyrinic A,C-diamide. NH(2) groups are provided by glutamine, and one molecule of ATP is hydrogenolyzed for each amidation. The polypeptide is Cobyric acid synthase (Salmonella gallinarum (strain 287/91 / NCTC 13346)).